Reading from the N-terminus, the 284-residue chain is MEMO1 family protein MmarC5_0191 (284 aa).

The protein belongs to the MEMO1 family.

This is MEMO1 family protein MmarC5_0191 from Methanococcus maripaludis (strain C5 / ATCC BAA-1333).